The following is a 479-amino-acid chain: Glycerol-3-phosphate acyltransferase RAM2 (479 aa).

4 helical membrane-spanning segments follow: residues 14–34 (YFAL…LVLA), 37–57 (LAGL…LIFA), 215–235 (SPLM…LACL), and 237–257 (IAAG…ALGV). An HXXXXD motif motif is present at residues 284 to 289 (HRTLLD). The N-linked (GlcNAc...) asparagine glycan is linked to Asn448.

This sequence belongs to the GPAT/DAPAT family.

The protein localises to the membrane. The enzyme catalyses sn-glycerol 3-phosphate + an acyl-CoA = a 1-acyl-sn-glycero-3-phosphate + CoA. It participates in lipid metabolism; glycerolipid metabolism. Functionally, involved in the production of cutin monomers. Esterifies acyl-group from acyl-ACP to the sn-2 position of glycerol-3-phosphate, a step in cutin biosynthesis. Required for colonization of the root by mycorrhizal fungi, and appropriate hyphopodia and arbuscule formation. Cutin monomers act as plant signals that promote colonization by arbuscular mycorrhizal fungi. This signaling function has been recruited by pathogenic oomycetes to facilitate appressoria formation and their own invasion. This Petunia hybrida (Petunia) protein is Glycerol-3-phosphate acyltransferase RAM2.